The primary structure comprises 449 residues: Phosphoglucosamine mutase (449 aa).

Catalysis depends on Ser-101, which acts as the Phosphoserine intermediate. Mg(2+) is bound by residues Ser-101, Asp-240, Asp-242, and Asp-244. Ser-101 bears the Phosphoserine mark.

This sequence belongs to the phosphohexose mutase family. Mg(2+) is required as a cofactor. Post-translationally, activated by phosphorylation.

The enzyme catalyses alpha-D-glucosamine 1-phosphate = D-glucosamine 6-phosphate. Catalyzes the conversion of glucosamine-6-phosphate to glucosamine-1-phosphate. The sequence is that of Phosphoglucosamine mutase from Streptococcus suis (strain 98HAH33).